We begin with the raw amino-acid sequence, 135 residues long: Mediator of RNA polymerase II transcription subunit 10 (135 aa).

The protein belongs to the Mediator complex subunit 10 family. As to quaternary structure, component of the Mediator complex.

The protein resides in the nucleus. Component of the Mediator complex, a coactivator involved in the regulated transcription of nearly all RNA polymerase II-dependent genes. Mediator functions as a bridge to convey information from gene-specific regulatory proteins to the basal RNA polymerase II transcription machinery. Mediator is recruited to promoters by direct interactions with regulatory proteins and serves as a scaffold for the assembly of a functional preinitiation complex with RNA polymerase II and the general transcription factors. This chain is Mediator of RNA polymerase II transcription subunit 10 (med10), found in Xenopus laevis (African clawed frog).